Reading from the N-terminus, the 1547-residue chain is Tubby-related protein 4 (1547 aa).

WD repeat units lie at residues G80–E119, D123–S162, and N165–V204. In terms of domain architecture, SOCS box spans A364–P414. The segment at S530–L580 is disordered. Residues I533–S546 show a composition bias toward low complexity. S577 carries the post-translational modification Phosphoserine. Asymmetric dimethylarginine occurs at positions 949 and 954. 2 positions are modified to phosphoserine: S1347 and S1378. Residues S1374 to P1414 are disordered. The segment at S1436–K1547 is TUB.

The protein belongs to the TUB family.

It localises to the cytoplasm. Its pathway is protein modification; protein ubiquitination. In terms of biological role, may be a substrate-recognition component of a SCF-like ECS (Elongin-Cullin-SOCS-box protein) E3 ubiquitin ligase complex which mediates the ubiquitination and subsequent proteasomal degradation of target proteins. This Mus musculus (Mouse) protein is Tubby-related protein 4 (Tulp4).